We begin with the raw amino-acid sequence, 437 residues long: Ribosomal protein uS12 methylthiotransferase RimO (437 aa).

Residues 4 to 114 form the MTTase N-terminal domain; the sequence is PRISFVSLGC…VIEAVHTAIP (111 aa). Cys-13, Cys-49, Cys-78, Cys-145, Cys-149, and Cys-152 together coordinate [4Fe-4S] cluster. The region spanning 131–369 is the Radical SAM core domain; sequence LTPRHYAYLK…MAKQQQISTH (239 aa). The 66-residue stretch at 372 to 437 folds into the TRAM domain; that stretch reads KKKIGKRLQV…DAYDLYGIAV (66 aa).

It belongs to the methylthiotransferase family. RimO subfamily. [4Fe-4S] cluster serves as cofactor.

Its subcellular location is the cytoplasm. It carries out the reaction L-aspartate(89)-[ribosomal protein uS12]-hydrogen + (sulfur carrier)-SH + AH2 + 2 S-adenosyl-L-methionine = 3-methylsulfanyl-L-aspartate(89)-[ribosomal protein uS12]-hydrogen + (sulfur carrier)-H + 5'-deoxyadenosine + L-methionine + A + S-adenosyl-L-homocysteine + 2 H(+). Functionally, catalyzes the methylthiolation of an aspartic acid residue of ribosomal protein uS12. This is Ribosomal protein uS12 methylthiotransferase RimO from Bartonella tribocorum (strain CIP 105476 / IBS 506).